The primary structure comprises 140 residues: Ribosomal RNA large subunit methyltransferase H (140 aa).

Residues Leu-55 and Gly-87 each coordinate S-adenosyl-L-methionine.

This sequence belongs to the RNA methyltransferase RlmH family. Homodimer.

It localises to the cytoplasm. It carries out the reaction pseudouridine(1915) in 23S rRNA + S-adenosyl-L-methionine = N(3)-methylpseudouridine(1915) in 23S rRNA + S-adenosyl-L-homocysteine + H(+). In terms of biological role, specifically methylates the pseudouridine at position 1915 (m3Psi1915) in 23S rRNA. This Erythrobacter litoralis (strain HTCC2594) protein is Ribosomal RNA large subunit methyltransferase H.